A 402-amino-acid chain; its full sequence is Elongation factor Tu (402 aa).

Positions K10 to E212 constitute a tr-type G domain. Residues G19–T26 are G1. G19 to T26 is a GTP binding site. T26 contacts Mg(2+). The tract at residues G60 to A64 is G2. The tract at residues D81–G84 is G3. Residues D81–H85 and N136–D139 each bind GTP. Positions N136 to D139 are G4. The interval S177–F179 is G5.

It belongs to the TRAFAC class translation factor GTPase superfamily. Classic translation factor GTPase family. EF-Tu/EF-1A subfamily. As to quaternary structure, monomer.

The protein resides in the cytoplasm. It catalyses the reaction GTP + H2O = GDP + phosphate + H(+). GTP hydrolase that promotes the GTP-dependent binding of aminoacyl-tRNA to the A-site of ribosomes during protein biosynthesis. The chain is Elongation factor Tu from Aliarcobacter butzleri (strain RM4018) (Arcobacter butzleri).